Reading from the N-terminus, the 162-residue chain is MSGLTHFDAAGHAHMVDVGDKQETRRIAIARGTIRMLPATFALIRDGKARKGDVLGVARIAAIQGAKRTADLIPLCHPLALTRVAVEFELDDALPGVHCVVQVETFGRTGVEMEALTAVQVGLLTVYDMCKAVDRGMVITDVSVREKRGGKSGDWKAEDAAG.

Substrate-binding positions include 75 to 77 and 113 to 114; these read LCH and ME. The active site involves D128.

This sequence belongs to the MoaC family. Homohexamer; trimer of dimers.

The catalysed reaction is (8S)-3',8-cyclo-7,8-dihydroguanosine 5'-triphosphate = cyclic pyranopterin phosphate + diphosphate. The protein operates within cofactor biosynthesis; molybdopterin biosynthesis. Functionally, catalyzes the conversion of (8S)-3',8-cyclo-7,8-dihydroguanosine 5'-triphosphate to cyclic pyranopterin monophosphate (cPMP). This chain is Cyclic pyranopterin monophosphate synthase, found in Burkholderia orbicola (strain MC0-3).